The primary structure comprises 349 residues: Methionine import ATP-binding protein MetN (349 aa).

One can recognise an ABC transporter domain in the interval Ile-5–Val-245. Gly-37–Ser-44 contacts ATP.

This sequence belongs to the ABC transporter superfamily. Methionine importer (TC 3.A.1.24) family. The complex is composed of two ATP-binding proteins (MetN), two transmembrane proteins (MetI) and a solute-binding protein (MetQ).

The protein resides in the cell membrane. The enzyme catalyses L-methionine(out) + ATP + H2O = L-methionine(in) + ADP + phosphate + H(+). The catalysed reaction is D-methionine(out) + ATP + H2O = D-methionine(in) + ADP + phosphate + H(+). Part of the ABC transporter complex MetNIQ involved in methionine import. Responsible for energy coupling to the transport system. The protein is Methionine import ATP-binding protein MetN of Lactobacillus johnsonii (strain CNCM I-12250 / La1 / NCC 533).